The primary structure comprises 330 residues: MSDLAIPTISCTESDGKYGRFVVEPLEKGFGTTMGNSLRRILLSYLDGVAITRVRIDGIQHEFCALPKAKEDTLDFLLNLKNIRVESLSGLEGILYLRASGSKVVTAADIEPSNDFEVVNPELYLLTLDSDDAVLNVELEVELGRGYRPPESAENTPIGTIPVDAIFTPIRKVNFTTEPMHVGRETSLERLVLEVWTDGTVEPATAVSRSADILVKQFASLVSHSKVVAEIEASEPVKYTIPEEKYNMPIEQLDLSVRAVNCLRHAGITTVGEVINRGTKELLTLRNFGLKSLTELEDRLKTIGLSLNPEDELFEEAENNKKKNKGIDED.

The tract at residues 1-225 is alpha N-terminal domain (alpha-NTD); that stretch reads MSDLAIPTIS…KQFASLVSHS (225 aa). Residues 237–330 are alpha C-terminal domain (alpha-CTD); sequence VKYTIPEEKY…KKKNKGIDED (94 aa).

Belongs to the RNA polymerase alpha chain family. Homodimer. The RNAP catalytic core consists of 2 alpha, 1 beta, 1 beta' and 1 omega subunit. When a sigma factor is associated with the core the holoenzyme is formed, which can initiate transcription.

The enzyme catalyses RNA(n) + a ribonucleoside 5'-triphosphate = RNA(n+1) + diphosphate. Its function is as follows. DNA-dependent RNA polymerase catalyzes the transcription of DNA into RNA using the four ribonucleoside triphosphates as substrates. The chain is DNA-directed RNA polymerase subunit alpha from Dehalococcoides mccartyi (strain CBDB1).